Reading from the N-terminus, the 199-residue chain is Phycocyanobilin lyase CpcT (199 aa).

The protein belongs to the CpcT/CpeT biliprotein lyase family.

In terms of biological role, catalyzes the site-selective attachment of phycocyanobilin (PCB) to 'Cys-154' of C-phycocyanin subunit beta (CpcB) and to 'Cys-153' of phycoerythrocyanin subunit beta (PecB). Does not have chromophore lyase activity for ApcA1, ApcA2, ApcB, ApcD, ApcF or PecA. The polypeptide is Phycocyanobilin lyase CpcT (cpcT1) (Nostoc sp. (strain PCC 7120 / SAG 25.82 / UTEX 2576)).